Consider the following 196-residue polypeptide: SERTA domain-containing protein 3 (196 aa).

The interval 1–21 (MVGGLKRKHSDLEEEEERWEW) is disordered. In terms of domain architecture, SERTA spans 26–73 (LQSYQQALLRISLDKVQRSLGPRAPSLRRHVLIHNTLQQLQAALRLAP). The segment at 104–125 (TSMDGTEPPQNPVTPLGLQNEV) is disordered.

In terms of assembly, interacts with RPA2. (Microbial infection) Interacts with influenza virus PA, PB1 and PB2,leading to inhibition of RdRp complex assembly. As to quaternary structure, (Microbial infection) Interacts with zika virus capsid protein.

The protein localises to the nucleus. Antiviral interferon-stimulated protein that plays a role in innate immunity and in the suppression of viruses through different mechanisms. Plays a role in the late phase response of TLR-induced immune effector expression. During influenza infection, interacts with PB2, PB1, and PA to disrupt the formation of the viral RdRp complex. Inhibits zika virus by interacting with the capsid protein in the nucleolus and reducing its abundance through proteasomal degradation. Strong transcriptional coactivator. In Homo sapiens (Human), this protein is SERTA domain-containing protein 3 (SERTAD3).